A 229-amino-acid chain; its full sequence is MTTILQNDWAPVLADEFEKPYYVKLRQTLKEEYQTQTIYPDMFHIFTALHLTEYQNAKVVILGQDPYHGPGQAHGLSFSVKPGIKPPPSLVNIYKELKSDVGFEIPQHGYLNHWAKQGVMMLNTVLTVRRGTPNSHKDIGWETFTDRIIHLLNDRETPLVFILWGKHAQEKAAFIDRNKHFVIASPHPSPFSANRGFFGSRPFSRTNEFLRSRGLQEIDWQLPMQVEEE.

Catalysis depends on Asp-65, which acts as the Proton acceptor.

The protein belongs to the uracil-DNA glycosylase (UDG) superfamily. UNG family.

Its subcellular location is the cytoplasm. It carries out the reaction Hydrolyzes single-stranded DNA or mismatched double-stranded DNA and polynucleotides, releasing free uracil.. Functionally, excises uracil residues from the DNA which can arise as a result of misincorporation of dUMP residues by DNA polymerase or due to deamination of cytosine. The protein is Uracil-DNA glycosylase of Brevibacillus brevis (strain 47 / JCM 6285 / NBRC 100599).